The primary structure comprises 318 residues: Ribonuclease Z (318 aa).

Residues His62, His64, Asp66, His67, His140, Asp211, and His269 each contribute to the Zn(2+) site. Catalysis depends on Asp66, which acts as the Proton acceptor.

Belongs to the RNase Z family. As to quaternary structure, homodimer. It depends on Zn(2+) as a cofactor.

The enzyme catalyses Endonucleolytic cleavage of RNA, removing extra 3' nucleotides from tRNA precursor, generating 3' termini of tRNAs. A 3'-hydroxy group is left at the tRNA terminus and a 5'-phosphoryl group is left at the trailer molecule.. Zinc phosphodiesterase, which displays some tRNA 3'-processing endonuclease activity. Probably involved in tRNA maturation, by removing a 3'-trailer from precursor tRNA. The chain is Ribonuclease Z from Brevibacillus brevis (strain 47 / JCM 6285 / NBRC 100599).